The sequence spans 140 residues: Large ribosomal subunit protein uL16 (140 aa).

This sequence belongs to the universal ribosomal protein uL16 family. As to quaternary structure, part of the 50S ribosomal subunit.

Its function is as follows. Binds 23S rRNA and is also seen to make contacts with the A and possibly P site tRNAs. This chain is Large ribosomal subunit protein uL16, found in Phytoplasma mali (strain AT).